Reading from the N-terminus, the 1325-residue chain is ATP-binding cassette sub-family C member 4 (1325 aa).

A run of 6 helical transmembrane segments spans residues 93 to 113 (LILG…PLFL), 136 to 156 (GYAA…HLYF), 205 to 225 (FDQV…AIAV), 227 to 247 (VLLW…LVIL), 322 to 342 (ASFF…YVLL), and 351 to 371 (VFVA…FFPS). The ABC transmembrane type-1 1 domain occupies 93–377 (LILGIFTLIE…FFPSAIERGS (285 aa)). The 224-residue stretch at 410-633 (VHVQDFTAFW…GVDFGSLLKK (224 aa)) folds into the ABC transporter 1 domain. 445 to 452 (GPVGAGKS) is an ATP binding site. 2 positions are modified to phosphothreonine: threonine 646 and threonine 648. A compositionally biased stretch (polar residues) spans 657–667 (ASIWSQQSSRP). Residues 657–690 (ASIWSQQSSRPSLKDGAPEGQDAENTQAVQPEES) form a disordered region. A phosphoserine mark is found at serine 664 and serine 668. Helical transmembrane passes span 710 to 730 (SWFF…FYVL), 761 to 781 (LSWY…FGIA), 849 to 869 (LVVS…IPLV), 954 to 974 (AICA…AKTL), and 977 to 997 (GQVG…QWSV). Residues 714–1005 (IIFLVLLNMV…SVRQSAEVEN (292 aa)) form the ABC transmembrane type-1 2 domain. The ABC transporter 2 domain maps to 1041–1274 (IVFDNVNFTY…PESLFYKMVQ (234 aa)). 1075 to 1082 (GRTGAGKS) serves as a coordination point for ATP. The short motif at 1322-1325 (ETAL) is the PDZ-binding element.

Interacts (via PDZ-binding motif) with SNX27 (via PDZ domain); this interaction accelerates MRP4 internalization. Mg(2+) serves as cofactor. In terms of processing, N-glycosylated; leading to substrate-selective effects on its transport activity.

The protein resides in the basolateral cell membrane. It localises to the apical cell membrane. The enzyme catalyses ATP + H2O + xenobioticSide 1 = ADP + phosphate + xenobioticSide 2.. It catalyses the reaction an S-substituted glutathione(in) + ATP + H2O = an S-substituted glutathione(out) + ADP + phosphate + H(+). The catalysed reaction is 17beta-estradiol 17-O-(beta-D-glucuronate)(in) + ATP + H2O = 17beta-estradiol 17-O-(beta-D-glucuronate)(out) + ADP + phosphate + H(+). It carries out the reaction dehydroepiandrosterone 3-sulfate(in) + ATP + H2O = dehydroepiandrosterone 3-sulfate(out) + ADP + phosphate + H(+). The enzyme catalyses leukotriene C4(in) + ATP + H2O = leukotriene C4(out) + ADP + phosphate + H(+). It catalyses the reaction leukotriene B4(in) + ATP + H2O = leukotriene B4(out) + ADP + phosphate + H(+). The catalysed reaction is urate(in) + ATP + H2O = urate(out) + ADP + phosphate + H(+). It carries out the reaction 3',5'-cyclic GMP(in) + ATP + H2O = 3',5'-cyclic GMP(out) + ADP + phosphate + H(+). The enzyme catalyses 3',5'-cyclic AMP(in) + ATP + H2O = 3',5'-cyclic AMP(out) + ADP + phosphate + H(+). It catalyses the reaction prostaglandin E2(in) + ATP + H2O = prostaglandin E2(out) + ADP + phosphate + H(+). The catalysed reaction is prostaglandin E1(in) + ATP + H2O = prostaglandin E1(out) + ADP + phosphate + H(+). It carries out the reaction glycodeoxycholate(in) + glutathione(in) + ATP + H2O = glycodeoxycholate(out) + glutathione(out) + ADP + phosphate + H(+). The enzyme catalyses cholate(in) + glutathione(in) + ATP + H2O = cholate(out) + glutathione(out) + ADP + phosphate + H(+). It catalyses the reaction glycocholate(in) + glutathione(in) + ATP + H2O = glycocholate(out) + glutathione(out) + ADP + phosphate + H(+). The catalysed reaction is taurocholate(in) + glutathione(in) + ATP + H2O = taurocholate(out) + glutathione(out) + ADP + phosphate + H(+). It carries out the reaction glycochenodeoxycholate(in) + glutathione(in) + ATP + H2O = glycochenodeoxycholate(out) + glutathione(out) + ADP + phosphate + H(+). The enzyme catalyses taurochenodeoxycholate(in) + glutathione(in) + ATP + H2O = taurochenodeoxycholate(out) + glutathione(out) + ADP + phosphate + H(+). It catalyses the reaction glycoursodeoxycholate(in) + glutathione(in) + ATP + H2O = glycoursodeoxycholate(out) + glutathione(out) + ADP + phosphate + H(+). The catalysed reaction is tauroursodeoxycholate(in) + glutathione(in) + ATP + H2O = tauroursodeoxycholate(out) + glutathione(out) + ADP + phosphate + H(+). Functionally, ATP-dependent transporter of the ATP-binding cassette (ABC) family that actively extrudes physiological compounds and xenobiotics from cells. Transports a range of endogenous molecules that have a key role in cellular communication and signaling, including cyclic nucleotides such as cyclic AMP (cAMP) and cyclic GMP (cGMP), bile acids, steroid conjugates, urate, and prostaglandins. Also mediates the ATP-dependent efflux of glutathione conjugates such as leukotriene C4 (LTC4) and leukotriene B4 (LTB4). The presence of GSH is necessary for the ATP-dependent transport of LTB4, whereas GSH is not required for the transport of LTC4. Mediates the cotransport of bile acids with reduced glutathione (GSH). Transports a wide range of drugs and their metabolites, including anticancer, antiviral and antibiotics molecules. Confers resistance to anticancer agents. The protein is ATP-binding cassette sub-family C member 4 of Mus musculus (Mouse).